A 131-amino-acid polypeptide reads, in one-letter code: Small ribosomal subunit protein bS6 (131 aa).

The tract at residues glutamate 98–glutamate 131 is disordered. Basic and acidic residues predominate over residues lysine 104 to phenylalanine 116. A compositionally biased stretch (acidic residues) spans threonine 120–glutamate 131.

This sequence belongs to the bacterial ribosomal protein bS6 family.

Binds together with bS18 to 16S ribosomal RNA. This chain is Small ribosomal subunit protein bS6, found in Salmonella dublin (strain CT_02021853).